A 282-amino-acid chain; its full sequence is Bifunctional protein FolD (282 aa).

NADP(+)-binding positions include 166–168 (GAS) and Ile232.

This sequence belongs to the tetrahydrofolate dehydrogenase/cyclohydrolase family. Homodimer.

It catalyses the reaction (6R)-5,10-methylene-5,6,7,8-tetrahydrofolate + NADP(+) = (6R)-5,10-methenyltetrahydrofolate + NADPH. It carries out the reaction (6R)-5,10-methenyltetrahydrofolate + H2O = (6R)-10-formyltetrahydrofolate + H(+). Its pathway is one-carbon metabolism; tetrahydrofolate interconversion. Catalyzes the oxidation of 5,10-methylenetetrahydrofolate to 5,10-methenyltetrahydrofolate and then the hydrolysis of 5,10-methenyltetrahydrofolate to 10-formyltetrahydrofolate. The chain is Bifunctional protein FolD from Haemophilus influenzae (strain PittEE).